Here is a 265-residue protein sequence, read N- to C-terminus: Neuronal membrane glycoprotein M6-b (265 aa).

The chain crosses the membrane as a helical span at residues 31–51 (GGVPYASLVATILCFSGVALF). N73 carries an N-linked (GlcNAc...) asparagine glycan. Helical transmembrane passes span 90–110 (VIYG…AEGF) and 136–156 (FVFL…FSAV). A glycan (N-linked (GlcNAc...) asparagine) is linked at N177. A helical transmembrane segment spans residues 224-244 (LFIVACAGAGATVIALLIYMM). S257 is modified (phosphoserine).

The protein belongs to the myelin proteolipid protein family. Interacts with SERT.

It is found in the membrane. It localises to the cell membrane. In terms of biological role, may be involved in neural development. Involved in regulation of osteoblast function and bone formation. Involved in matrix vesicle release by osteoblasts; this function seems to involve maintenance of the actin cytoskeleton. May be involved in cellular trafficking of SERT and thereby in regulation of serotonin uptake. In Pongo abelii (Sumatran orangutan), this protein is Neuronal membrane glycoprotein M6-b (GPM6B).